The following is a 31-amino-acid chain: Chymotrypsin (31 aa).

The Peptidase S1 domain maps to 1-31 (IVGGVEAVPGVWPYQAALFIIDMYFCGGSLI).

This sequence belongs to the peptidase S1 family.

The protein localises to the secreted. Its subcellular location is the extracellular space. The enzyme catalyses Preferential cleavage: Tyr-|-Xaa, Trp-|-Xaa, Phe-|-Xaa, Leu-|-Xaa.. The polypeptide is Chymotrypsin (Penaeus monodon (Giant tiger prawn)).